The chain runs to 245 residues: 3-deoxy-manno-octulosonate cytidylyltransferase (245 aa).

Belongs to the KdsB family.

Its subcellular location is the cytoplasm. The enzyme catalyses 3-deoxy-alpha-D-manno-oct-2-ulosonate + CTP = CMP-3-deoxy-beta-D-manno-octulosonate + diphosphate. It participates in nucleotide-sugar biosynthesis; CMP-3-deoxy-D-manno-octulosonate biosynthesis; CMP-3-deoxy-D-manno-octulosonate from 3-deoxy-D-manno-octulosonate and CTP: step 1/1. It functions in the pathway bacterial outer membrane biogenesis; lipopolysaccharide biosynthesis. Functionally, activates KDO (a required 8-carbon sugar) for incorporation into bacterial lipopolysaccharide in Gram-negative bacteria. This chain is 3-deoxy-manno-octulosonate cytidylyltransferase, found in Rhodopseudomonas palustris (strain ATCC BAA-98 / CGA009).